We begin with the raw amino-acid sequence, 114 residues long: MASAPISMLAMLFTLSGLRAQSVAQPEDQVNVAEGNPLTVKCTYSVSGNPYLFWYVQYPNRGLQFLLKYITGDNLVKGSYGFEAEFNKSQTSFHLKKPSALVSDSALYFCAVRD.

An N-terminal signal peptide occupies residues 1–20 (MASAPISMLAMLFTLSGLRA). An Ig-like domain is found at 21 to 114 (QSVAQPEDQV…SALYFCAVRD (94 aa)). Cysteine 42 and cysteine 110 form a disulfide bridge. A glycan (N-linked (GlcNAc...) asparagine) is linked at asparagine 87.

In terms of assembly, alpha-beta TR is a heterodimer composed of an alpha and beta chain; disulfide-linked. The alpha-beta TR is associated with the transmembrane signaling CD3 coreceptor proteins to form the TR-CD3 (TcR or TCR). The assembly of alpha-beta TR heterodimers with CD3 occurs in the endoplasmic reticulum where a single alpha-beta TR heterodimer associates with one CD3D-CD3E heterodimer, one CD3G-CD3E heterodimer and one CD247 homodimer forming a stable octameric structure. CD3D-CD3E and CD3G-CD3E heterodimers preferentially associate with TR alpha and TR beta chains, respectively. The association of the CD247 homodimer is the last step of TcR assembly in the endoplasmic reticulum and is required for transport to the cell surface.

It is found in the cell membrane. Functionally, v region of the variable domain of T cell receptor (TR) alpha chain that participates in the antigen recognition. Alpha-beta T cell receptors are antigen specific receptors which are essential to the immune response and are present on the cell surface of T lymphocytes. Recognize peptide-major histocompatibility (MH) (pMH) complexes that are displayed by antigen presenting cells (APC), a prerequisite for efficient T cell adaptive immunity against pathogens. Binding of alpha-beta TR to pMH complex initiates TR-CD3 clustering on the cell surface and intracellular activation of LCK that phosphorylates the ITAM motifs of CD3G, CD3D, CD3E and CD247 enabling the recruitment of ZAP70. In turn ZAP70 phosphorylates LAT, which recruits numerous signaling molecules to form the LAT signalosome. The LAT signalosome propagates signal branching to three major signaling pathways, the calcium, the mitogen-activated protein kinase (MAPK) kinase and the nuclear factor NF-kappa-B (NF-kB) pathways, leading to the mobilization of transcription factors that are critical for gene expression and essential for T cell growth and differentiation. The T cell repertoire is generated in the thymus, by V-(D)-J rearrangement. This repertoire is then shaped by intrathymic selection events to generate a peripheral T cell pool of self-MH restricted, non-autoaggressive T cells. Post-thymic interaction of alpha-beta TR with the pMH complexes shapes TR structural and functional avidity. This Homo sapiens (Human) protein is T cell receptor alpha variable 3.